A 195-amino-acid chain; its full sequence is Pyridoxal 5'-phosphate synthase subunit PdxT (195 aa).

46-48 (GES) provides a ligand contact to L-glutamine. Cys-78 (nucleophile) is an active-site residue. Residues Arg-107 and 136-137 (IR) each bind L-glutamine. Catalysis depends on charge relay system residues His-173 and Glu-175.

It belongs to the glutaminase PdxT/SNO family. As to quaternary structure, in the presence of PdxS, forms a dodecamer of heterodimers. Only shows activity in the heterodimer.

It carries out the reaction aldehydo-D-ribose 5-phosphate + D-glyceraldehyde 3-phosphate + L-glutamine = pyridoxal 5'-phosphate + L-glutamate + phosphate + 3 H2O + H(+). It catalyses the reaction L-glutamine + H2O = L-glutamate + NH4(+). The protein operates within cofactor biosynthesis; pyridoxal 5'-phosphate biosynthesis. Its function is as follows. Catalyzes the hydrolysis of glutamine to glutamate and ammonia as part of the biosynthesis of pyridoxal 5'-phosphate. The resulting ammonia molecule is channeled to the active site of PdxS. This chain is Pyridoxal 5'-phosphate synthase subunit PdxT, found in Dehalococcoides mccartyi (strain CBDB1).